The sequence spans 456 residues: Adenylosuccinate synthetase isozyme 1 (456 aa).

A disordered region spans residues 1–30 (MSSGWSQNDHRSYSNPPPVSGKRPRNDSGN). Residues 41–47 (GDEGKGK) and 69–71 (GHT) each bind GTP. The Proton acceptor role is filled by Asp42. Mg(2+)-binding residues include Asp42 and Gly69. Residue Asp42 participates in substrate binding. IMP-binding positions include 42–45 (DEGK) and 67–70 (NAGH). His70 functions as the Proton donor in the catalytic mechanism. Ser130 carries the phosphoserine modification. Thr162, Arg176, Asn255, Thr270, and Arg334 together coordinate IMP. 330 to 336 (VTTGRKR) contributes to the substrate binding site. GTP contacts are provided by residues Arg336, 362 to 364 (KLD), and 444 to 447 (GVGK).

This sequence belongs to the adenylosuccinate synthetase family. Homodimer. Mg(2+) serves as cofactor.

The protein resides in the cytoplasm. It catalyses the reaction IMP + L-aspartate + GTP = N(6)-(1,2-dicarboxyethyl)-AMP + GDP + phosphate + 2 H(+). It participates in purine metabolism; AMP biosynthesis via de novo pathway; AMP from IMP: step 1/2. Functionally, component of the purine nucleotide cycle (PNC), which interconverts IMP and AMP to regulate the nucleotide levels in various tissues, and which contributes to glycolysis and ammoniagenesis. Catalyzes the first committed step in the biosynthesis of AMP from IMP. The sequence is that of Adenylosuccinate synthetase isozyme 1 (adss1) from Danio rerio (Zebrafish).